Reading from the N-terminus, the 440-residue chain is Thymidine phosphorylase (440 aa).

It belongs to the thymidine/pyrimidine-nucleoside phosphorylase family. In terms of assembly, homodimer.

The enzyme catalyses thymidine + phosphate = 2-deoxy-alpha-D-ribose 1-phosphate + thymine. Its pathway is pyrimidine metabolism; dTMP biosynthesis via salvage pathway; dTMP from thymine: step 1/2. Functionally, the enzymes which catalyze the reversible phosphorolysis of pyrimidine nucleosides are involved in the degradation of these compounds and in their utilization as carbon and energy sources, or in the rescue of pyrimidine bases for nucleotide synthesis. This is Thymidine phosphorylase from Klebsiella pneumoniae (strain 342).